A 563-amino-acid chain; its full sequence is Lipase 1 (563 aa).

The N-terminal stretch at 1-19 (MVSKTFFLAAALNVVGTLA) is a signal peptide. Residue Gln-20 is modified to Pyrrolidone carboxylic acid. Cysteines 80 and 124 form a disulfide. Ser-236 (acyl-ester intermediate) is an active-site residue. Residues Cys-295 and Cys-307 are joined by a disulfide bond. Asn-302 carries N-linked (GlcNAc...) asparagine glycosylation. Glu-373 functions as the Charge relay system in the catalytic mechanism. An N-linked (GlcNAc...) asparagine glycan is attached at Asn-383. The active-site Charge relay system is His-482.

The protein belongs to the type-B carboxylesterase/lipase family. As to quaternary structure, monomer.

The protein resides in the secreted. The catalysed reaction is a triacylglycerol + H2O = a diacylglycerol + a fatty acid + H(+). Its function is as follows. Hydrolyzes all ester bonds in triglyceride and displays a high affinity for triolein. For unsaturated substrates having long fatty acyl chains (C18:2 cis-9, cis-12 and C18:3 cis-9, cis-12, cis-15) GCL I shows higher specific activity than GCL II, whereas GCL II shows higher specific activity against saturated substrates having short fatty acid chains (C8, C10, C12 and C14). The sequence is that of Lipase 1 (LIP1) from Geotrichum candidum (Oospora lactis).